A 195-amino-acid polypeptide reads, in one-letter code: MKDKILKIVRTTKETDISAELKIYGEGRCEIATGVGFFDHMLEAFGKHALLDMKISCKGDTHVDFHHSVEDVGIVIGTLLKEAIYPVSGIERFGDSVVVMDEAAVSCALDLSNRAFLVYENFNEKGKVGEFDIELAEEFFRAVSMNANITLHIAKLRGRNNHHIIEAAFKSFAVALRRALAKNPRVNTPSTKGVL.

This sequence belongs to the imidazoleglycerol-phosphate dehydratase family.

It is found in the cytoplasm. It catalyses the reaction D-erythro-1-(imidazol-4-yl)glycerol 3-phosphate = 3-(imidazol-4-yl)-2-oxopropyl phosphate + H2O. It functions in the pathway amino-acid biosynthesis; L-histidine biosynthesis; L-histidine from 5-phospho-alpha-D-ribose 1-diphosphate: step 6/9. This is Imidazoleglycerol-phosphate dehydratase from Campylobacter curvus (strain 525.92).